The primary structure comprises 926 residues: Serine/threonine-protein kinase SIK2 (926 aa).

Residues 20-271 (YDIEGTLGKG…IAQIKEHKWM (252 aa)) enclose the Protein kinase domain. Residue Thr-25 is modified to Phosphothreonine. ATP is bound by residues 26-34 (LGKGNFAVV) and Lys-49. Lys-53 carries the N6-acetyllysine; by EP300 modification. Residue Asp-142 is the Proton acceptor of the active site. Thr-175 bears the Phosphothreonine; by LKB1 mark. The UBA domain maps to 295-335 (EFNEQVLRLMHSLGIDQQKTIESLQNKSYNHFAAIYFLLVE). Residue Thr-484 is modified to Phosphothreonine. Ser-534 and Ser-587 each carry phosphoserine. Low complexity-rich tracts occupy residues 644 to 659 (SSCP…ESVS) and 742 to 756 (SSYP…LPRQ). Disordered stretches follow at residues 644–666 (SSCP…ASVH), 742–776 (SSYP…PLSP), and 801–896 (PLPS…SSYD). Residues 765–774 (APPFSLTQPL) show a composition bias toward polar residues. Pro residues predominate over residues 822-834 (QPPPPPPPPPPRQ).

This sequence belongs to the protein kinase superfamily. CAMK Ser/Thr protein kinase family. SNF1 subfamily. Interacts with and phosphorylates TORC2/CRTC2. Mg(2+) is required as a cofactor. In terms of processing, phosphorylated at Thr-175 by STK11/LKB1 in complex with STE20-related adapter-alpha (STRADA) pseudo kinase and CAB39. Phosphorylated at Thr-484 in response to insulin in adipocytes. Acetylation at Lys-53 inhibits kinase activity. Deacetylated by HDAC6.

Its subcellular location is the cytoplasm. It localises to the endoplasmic reticulum membrane. It carries out the reaction L-seryl-[protein] + ATP = O-phospho-L-seryl-[protein] + ADP + H(+). It catalyses the reaction L-threonyl-[protein] + ATP = O-phospho-L-threonyl-[protein] + ADP + H(+). With respect to regulation, activated by phosphorylation on Thr-175. Its function is as follows. Serine/threonine-protein kinase that plays a role in many biological processes such as fatty acid oxidation, autophagy, immune response or glucose metabolism. Phosphorylates 'Ser-794' of IRS1 in insulin-stimulated adipocytes, potentially modulating the efficiency of insulin signal transduction. Inhibits CREB activity by phosphorylating and repressing TORCs, the CREB-specific coactivators. Phosphorylates EP300 and thus inhibits its histone acetyltransferase activity. In turn, regulates the DNA-binding ability of several transcription factors such as PPARA or MLXIPL. Also plays a role in thymic T-cell development. The protein is Serine/threonine-protein kinase SIK2 (SIK2) of Homo sapiens (Human).